The primary structure comprises 636 residues: Iron transport multicopper oxidase FET3 (636 aa).

Residues 1–21 form the signal peptide; that stretch reads MTNALLSIAVLLFSMLSLAQA. Topologically, residues 22–559 are extracellular; sequence ETHTFNWTTG…AFIPTGFTKK (538 aa). N-linked (GlcNAc...) asparagine glycans are attached at residues asparagine 27, asparagine 74, and asparagine 77. 2 Plastocyanin-like domains span residues 32 to 146 and 157 to 301; these read WDYR…IKDD and SLSL…VYNK. Positions 81 and 83 each coordinate Cu cation. N-linked (GlcNAc...) asparagine glycosylation is found at asparagine 88 and asparagine 113. Positions 126 and 128 each coordinate Cu cation. Asparagine 194, asparagine 198, asparagine 244, asparagine 265, asparagine 292, asparagine 300, asparagine 359, and asparagine 381 each carry an N-linked (GlcNAc...) asparagine glycan. A Plastocyanin-like 3 domain is found at 362–502; the sequence is YTAPKVPTLM…GLGLVLVEDP (141 aa). Positions 413, 416, 418, 483, 484, 485, and 489 each coordinate Cu cation. A helical transmembrane segment spans residues 560-584; it reads GIIAMTFSCFAGILGIITIAIYGMM. Residues 585–636 are Cytoplasmic-facing; sequence DMEDATEKVIRDLHVDPEVLLNEVDENEERQVNEDRHSTEKHQFLTKAKRFF.

Belongs to the multicopper oxidase family. It depends on Cu cation as a cofactor.

The protein resides in the cell membrane. The enzyme catalyses 4 Fe(2+) + O2 + 4 H(+) = 4 Fe(3+) + 2 H2O. It carries out the reaction 4 Cu(+) + O2 + 4 H(+) = 4 Cu(2+) + 2 H2O. In terms of biological role, iron transport multicopper ferroxidase required for Fe(2+) ion high affinity uptake. Required to oxidize Fe(2+) to Fe(3+), which is then transported into the cell via the ferric iron permease FTR1. Essential component of copper-dependent iron transport. Also has cuprous oxidase activity. This is Iron transport multicopper oxidase FET3 (FET3) from Saccharomyces cerevisiae (strain ATCC 204508 / S288c) (Baker's yeast).